The following is a 175-amino-acid chain: Protein her-1 (175 aa).

The N-terminal stretch at 1–18 is a signal peptide; the sequence is MRYLPIFVFLGSFGYTET. Residues asparagine 98 and asparagine 163 are each glycosylated (N-linked (GlcNAc...) asparagine).

It localises to the secreted. Functionally, dictates male development. Probably plays a direct role in cell signaling during C.elegans sex determination. Inhibits the function of tra-2a. This is Protein her-1 (her-1) from Caenorhabditis elegans.